The primary structure comprises 4776 residues: Pneumococcal serine-rich repeat protein (4776 aa).

An N-terminal signal peptide occupies residues 1–72 (MTETVEDKVS…VVLGTISTSN (72 aa)). O-linked (GlcNAc...) serine glycans are attached at residues Ser-73, Ser-75, Ser-76, Ser-78, Ser-80, Ser-82, Ser-94, Ser-100, Ser-108, Ser-110, Ser-118, Ser-120, and Ser-121. The serine-rich repeat region 1, SRR1 stretch occupies residues 73–121 (SASSTSLSASESASTSASESASTSASTSASTSASESASTSASTSISASS). Residues 86–112 (STSASESASTSASTSASTSASESASTS) form a disordered region. A self aggregating domain region spans residues 122–166 (TVVGSQTAAATEATAKKVEEDRKKPASDYVASVTNVNLQSYAKRR). The basic region, BR stretch occupies residues 122–394 (TVVGSQTAAA…QSKSLSVSAS (273 aa)). The Host furin cleavage recognition motif lies at 164–168 (KRRKR). The keratin 10-binding domain, cell-type specific binding to lung-derived cells stretch occupies residues 273-341 (TQTMLTLGSD…GYGLTSSWTV (69 aa)). The segment at 395-4712 (QSASASASTS…ASTSASASAS (4318 aa)) is serine-rich repeat region 2, SRR2. Disordered stretches follow at residues 481–627 (ASTS…STSA), 861–889 (ASAS…SAST), 925–965 (ASAS…SASA), 1052–1085 (SAST…SASA), 1123–1153 (ASAS…STSA), 1171–1199 (ASAS…STSA), 1311–1357 (ASES…SAST), 1671–1731 (ASES…SESA), 1792–1863 (SASE…STSA), 2105–2133 (ASAS…SAST), 2169–2209 (ASAS…SASA), 2296–2329 (SAST…SASA), 2367–2397 (ASAS…STSA), 2415–2443 (ASAS…STSA), 2571–2631 (ASES…SESA), 2737–2805 (ESAS…STSA), 2855–3113 (ASAS…STSA), 3347–3375 (ASAS…SAST), 3411–3451 (ASAS…SASA), 3538–3571 (SAST…SASA), 3609–3639 (ASAS…STSA), 3657–3685 (ASAS…STSA), 3797–3843 (ASES…SAST), 4167–4197 (ASAS…STSA), 4215–4243 (ASAS…STSA), 4355–4401 (ASES…SAST), and 4706–4747 (SASA…GTES). The span at 4715–4747 (VSNSANHSNSQVGNTSGSTGKSQKELPNTGTES) shows a compositional bias: polar residues. The LPXTG sorting signal signature appears at 4740–4744 (LPNTG). Thr-4743 is modified (pentaglycyl murein peptidoglycan amidated threonine). A propeptide spans 4744-4776 (GTESSIGSVLLGVLAAVTGIGLVAKRRKRDEEE) (removed by sortase).

It belongs to the serine-rich repeat protein (SRRP) family. As to quaternary structure, binds to human and mouse protein keratin 10 (KRT10). Glycosylated. Only truncated substrates greater than 25 residues long are glycosylated by the Gtf1-Gtf2 complex in vitro; only Ser residues have been seen to be glycosylated. Based on electrophoretic mobility it is probable that most of the Ser residues in SSR1 and SSR2 are O-GlcNAcylated. Subsequent glycosylation by up to 7 sugar transferases (Gtf3 and GlyAT, GlyB, GlyD, GlyE, GlyF and GlyG) is able to generate very high sugar polymorphism. Post-translationally, can be cleaved by human furin protease; this fragment contributes to self-aggregation and possibly biofilm formation in vitro.

It is found in the secreted. The protein localises to the cell wall. Its subcellular location is the cell surface. Functionally, protein that allows bacteria to adhere to mammalian host cells. Required for full virulence in mouse infection models when infected intranasally. Required for adhesion to host cells in vitro and for persistence in the lower respiratory tract. Binds host keratin 10 (KRT10) on lung cells which mediates adhesion via the C-terminus of the basic region (BR, residues 273-341); glycosylation of either protein is not required for the interaction. A region in the N-terminus (residues 122-166) self aggregates, contributing to mature biofilm formation. The basic region (BR, residues 187-385) also self aggregates; the BR binds DNA which enhances self aggregation. The polypeptide is Pneumococcal serine-rich repeat protein (Streptococcus pneumoniae serotype 4 (strain ATCC BAA-334 / TIGR4)).